A 150-amino-acid polypeptide reads, in one-letter code: Aspartate 1-decarboxylase (150 aa).

Ser-24 serves as the catalytic Schiff-base intermediate with substrate; via pyruvic acid. Position 24 is a pyruvic acid (Ser) (Ser-24). Residue Thr-56 participates in substrate binding. Catalysis depends on Tyr-57, which acts as the Proton donor. Substrate is bound at residue 72 to 74 (GAA).

Belongs to the PanD family. In terms of assembly, heterooctamer of four alpha and four beta subunits. Pyruvate serves as cofactor. Post-translationally, is synthesized initially as an inactive proenzyme, which is activated by self-cleavage at a specific serine bond to produce a beta-subunit with a hydroxyl group at its C-terminus and an alpha-subunit with a pyruvoyl group at its N-terminus.

The protein resides in the cytoplasm. The enzyme catalyses L-aspartate + H(+) = beta-alanine + CO2. It functions in the pathway cofactor biosynthesis; (R)-pantothenate biosynthesis; beta-alanine from L-aspartate: step 1/1. Catalyzes the pyruvoyl-dependent decarboxylation of aspartate to produce beta-alanine. This Xanthobacter autotrophicus (strain ATCC BAA-1158 / Py2) protein is Aspartate 1-decarboxylase.